A 629-amino-acid polypeptide reads, in one-letter code: Mitochondrial Rho GTPase 1 (629 aa).

Over 1-600 the chain is Cytoplasmic; sequence MSTAVRICVC…PRSEEPPADR (600 aa). The region spanning 2–170 is the Miro 1 domain; it reads STAVRICVCG…FYLCQKAVTH (169 aa). GTP-binding positions include 11–18, 59–63, and 115–118; these read GDEGTGKS, DTSAR, and NKSD. 2 EF-hand domains span residues 186–221 and 306–341; these read ACVD…SFDK and AGYR…TPGL. Residues aspartate 199, aspartate 201, aspartate 203, tyrosine 205, glutamate 210, aspartate 319, aspartate 321, aspartate 323, and glutamate 330 each coordinate Ca(2+). The 165-residue stretch at 421–585 folds into the Miro 2 domain; that stretch reads RNVVLCYILG…FVALAEAATN (165 aa). GTP contacts are provided by residues 430–437, 466–470, and 535–538; these read GSSGAGKS, ELQGG, and LKAD. The chain crosses the membrane as a helical; Anchor for type IV membrane protein span at residues 601–621; it reads ASLYMALGATACAALAAFMIW. Residues 622–629 are Mitochondrial intermembrane-facing; the sequence is RRSTSNAA.

The protein belongs to the mitochondrial Rho GTPase family.

It is found in the mitochondrion outer membrane. In terms of biological role, mitochondrial GTPase involved in mitochondrial trafficking. Probably involved in control of anterograde transport of mitochondria and their subcellular distribution. The sequence is that of Mitochondrial Rho GTPase 1 (gem-1) from Neurospora crassa (strain ATCC 24698 / 74-OR23-1A / CBS 708.71 / DSM 1257 / FGSC 987).